Here is a 282-residue protein sequence, read N- to C-terminus: Stress response regulator protein 1 (282 aa).

Low complexity-rich tracts occupy residues 12 to 30 and 41 to 58; these read NLSR…HSST and SLDT…SNNN. Disordered regions lie at residues 12-31, 41-84, and 112-139; these read NLSR…SSTV, SLDT…DDED, and LTPF…TTVV. Residues 66–77 show a composition bias toward polar residues; sequence SDYNSYTHNQYY. The span at 125–139 shows a compositional bias: low complexity; the sequence is SIISSKSSNKSTTVV. Residues 155 to 273 form the Response regulatory domain; sequence SFLIVDDNII…LDFMANSIDD (119 aa). The residue at position 206 (aspartate 206) is a 4-aspartylphosphate.

Required for stress adaptation, morphogenesis and virulence. This is Stress response regulator protein 1 (SRR1) from Candida albicans (strain WO-1) (Yeast).